The following is a 321-amino-acid chain: Small ribosomal subunit biogenesis GTPase RsgA (321 aa).

The CP-type G domain occupies 89–248; that stretch reads QSWINRPPVA…VADTPGFNRP (160 aa). GTP-binding positions include 138 to 141 and 190 to 198; these read TKRD and GPSGVGKTS. The Zn(2+) site is built by C273, C278, H280, and C286.

The protein belongs to the TRAFAC class YlqF/YawG GTPase family. RsgA subfamily. In terms of assembly, monomer. Associates with 30S ribosomal subunit, binds 16S rRNA. Requires Zn(2+) as cofactor.

The protein localises to the cytoplasm. Its function is as follows. One of several proteins that assist in the late maturation steps of the functional core of the 30S ribosomal subunit. Helps release RbfA from mature subunits. May play a role in the assembly of ribosomal proteins into the subunit. Circularly permuted GTPase that catalyzes slow GTP hydrolysis, GTPase activity is stimulated by the 30S ribosomal subunit. The polypeptide is Small ribosomal subunit biogenesis GTPase RsgA (Prochlorococcus marinus (strain MIT 9303)).